The chain runs to 226 residues: Large ribosomal subunit protein uL1 (226 aa).

This sequence belongs to the universal ribosomal protein uL1 family. Part of the 50S ribosomal subunit.

Binds directly to 23S rRNA. The L1 stalk is quite mobile in the ribosome, and is involved in E site tRNA release. Its function is as follows. Protein L1 is also a translational repressor protein, it controls the translation of the L11 operon by binding to its mRNA. The polypeptide is Large ribosomal subunit protein uL1 (Borreliella afzelii (strain PKo) (Borrelia afzelii)).